A 251-amino-acid chain; its full sequence is Triosephosphate isomerase (251 aa).

9-11 is a binding site for substrate; the sequence is NWK. His95 (electrophile) is an active-site residue. The Proton acceptor role is filled by Glu167. Residues Gly173, Ser213, and 234-235 contribute to the substrate site; that span reads GG.

Belongs to the triosephosphate isomerase family. In terms of assembly, homodimer.

The protein localises to the cytoplasm. The enzyme catalyses D-glyceraldehyde 3-phosphate = dihydroxyacetone phosphate. It participates in carbohydrate biosynthesis; gluconeogenesis. The protein operates within carbohydrate degradation; glycolysis; D-glyceraldehyde 3-phosphate from glycerone phosphate: step 1/1. In terms of biological role, involved in the gluconeogenesis. Catalyzes stereospecifically the conversion of dihydroxyacetone phosphate (DHAP) to D-glyceraldehyde-3-phosphate (G3P). This is Triosephosphate isomerase from Pediococcus pentosaceus (strain ATCC 25745 / CCUG 21536 / LMG 10740 / 183-1w).